The primary structure comprises 59 residues: Large ribosomal subunit protein bL32 (59 aa).

It belongs to the bacterial ribosomal protein bL32 family.

The sequence is that of Large ribosomal subunit protein bL32 from Malacoplasma penetrans (strain HF-2) (Mycoplasma penetrans).